A 663-amino-acid chain; its full sequence is Methionine--tRNA ligase (663 aa).

A 'HIGH' region motif is present at residues 10 to 20; it reads AYTNGPLHLGH. Residues cysteine 142, cysteine 145, cysteine 154, and cysteine 157 each coordinate Zn(2+). A 'KMSKS' region motif is present at residues 323–327; it reads KMSTS. Position 326 (threonine 326) interacts with ATP. One can recognise a tRNA-binding domain in the interval 563-663; sequence YFGNIDLRVG…RDLPVGSKIH (101 aa).

Belongs to the class-I aminoacyl-tRNA synthetase family. MetG type 1 subfamily. Homodimer. The cofactor is Zn(2+).

The protein localises to the cytoplasm. The enzyme catalyses tRNA(Met) + L-methionine + ATP = L-methionyl-tRNA(Met) + AMP + diphosphate. Is required not only for elongation of protein synthesis but also for the initiation of all mRNA translation through initiator tRNA(fMet) aminoacylation. In Methanococcus maripaludis (strain C5 / ATCC BAA-1333), this protein is Methionine--tRNA ligase.